Here is a 405-residue protein sequence, read N- to C-terminus: Probable tRNA sulfurtransferase (405 aa).

Positions 60-165 constitute a THUMP domain; the sequence is VPVAESLKQI…EEAAYLSYEN (106 aa). Residues 183 to 184, 208 to 209, R265, G287, and Q296 contribute to the ATP site; these read ML and HF.

Belongs to the ThiI family.

Its subcellular location is the cytoplasm. It catalyses the reaction [ThiI sulfur-carrier protein]-S-sulfanyl-L-cysteine + a uridine in tRNA + 2 reduced [2Fe-2S]-[ferredoxin] + ATP + H(+) = [ThiI sulfur-carrier protein]-L-cysteine + a 4-thiouridine in tRNA + 2 oxidized [2Fe-2S]-[ferredoxin] + AMP + diphosphate. The catalysed reaction is [ThiS sulfur-carrier protein]-C-terminal Gly-Gly-AMP + S-sulfanyl-L-cysteinyl-[cysteine desulfurase] + AH2 = [ThiS sulfur-carrier protein]-C-terminal-Gly-aminoethanethioate + L-cysteinyl-[cysteine desulfurase] + A + AMP + 2 H(+). The protein operates within cofactor biosynthesis; thiamine diphosphate biosynthesis. Catalyzes the ATP-dependent transfer of a sulfur to tRNA to produce 4-thiouridine in position 8 of tRNAs, which functions as a near-UV photosensor. Also catalyzes the transfer of sulfur to the sulfur carrier protein ThiS, forming ThiS-thiocarboxylate. This is a step in the synthesis of thiazole, in the thiamine biosynthesis pathway. The sulfur is donated as persulfide by IscS. The protein is Probable tRNA sulfurtransferase of Streptococcus mutans serotype c (strain ATCC 700610 / UA159).